Here is a 644-residue protein sequence, read N- to C-terminus: Sodium/hydrogen exchanger 9 (644 aa).

The Lumenal portion of the chain corresponds to 1-20 (MAGQLRFTSGKDEDHFQHQG). A helical transmembrane segment spans residues 21–41 (AVELLAFNFLLILTILTIWLF). Residues 42–45 (KNHR) lie on the Cytoplasmic side of the membrane. A helical membrane pass occupies residues 46–66 (FRFLHETGGAMVYGLIMGLIL). The Lumenal portion of the chain corresponds to 67-126 (RYATAPTDIDSGTVYNCGNLFFSPSTLLVNITDQVYEYKYQREINQHNISPHQGNAILEK). Residues 127-147 (MTFDPEIFFNVLLPPIIFHAG) traverse the membrane as a helical segment. At 148-164 (YSLKKRHFFQNLGSILT) the chain is on the cytoplasmic side. Residues 165–185 (YAFLGTAISCVVIGLIMYGFV) traverse the membrane as a helical segment. Residues 186–203 (KAMVHAGQLKSGDFHFTD) lie on the Lumenal side of the membrane. A helical transmembrane segment spans residues 204-224 (CLFFGSLMSATDPVTVLAIFH). Residues 225–235 (ELHVDPDLYTL) lie on the Cytoplasmic side of the membrane. Residues 236-256 (LFGESVLNDAVAIVLTYSISI) form a helical membrane-spanning segment. The Lumenal segment spans residues 257–277 (YSPKENPNAFDTAAFFQSVGN). The helical transmembrane segment at 278-298 (FLGIFAGSFAMGSAYAVVTAL) threads the bilayer. Over 299 to 309 (LTKFTKLREFP) the chain is Cytoplasmic. Residues 310 to 327 (MLETGLFFLLSWSAFLSA) form a helical membrane-spanning segment. At 328-333 (EAAGLT) the chain is on the lumenal side. A helical membrane pass occupies residues 334-350 (GIVAVLFCGVTQAHYTY). Over 351–364 (NNLSSDSKLRTKQL) the chain is Cytoplasmic. Residues 365–385 (FEFMNFLAENVIFCYMGLALF) form a helical membrane-spanning segment. A topological domain (lumenal) is located at residue threonine 386. A helical membrane pass occupies residues 387-407 (FQNHIFNALFILGAFLAIFVA). Residues 408–429 (RACNIYPLSFLLNLGRKQKIPW) lie on the Cytoplasmic side of the membrane. A helical membrane pass occupies residues 430–450 (NFQHMMMFSGLRGAIAFALAI). Topologically, residues 451–465 (RNTESQPKQMMFTTT) are lumenal. The helical transmembrane segment at 466-486 (LLLVFFTVWVFGGGTTPMLTW) threads the bilayer. At 487-644 (LQIRVGVDLD…EQTRGQPQMD (158 aa)) the chain is on the cytoplasmic side. Positions 590–644 (YQEQSPSPSSPTTKLALDQKSSGQTPGKENIYEGDLGLGGYDLKLEQTRGQPQMD) are disordered.

Belongs to the monovalent cation:proton antiporter 1 (CPA1) transporter (TC 2.A.36) family. Homodimer; phosphatidylinositol-4,5-bisphosphate (PIP2) and phosphatidylinositol 3,4,5-trisphosphate (PIP3) could be involved in the dimer stabilization. Interacts (via the C-terminus) with RACK1. Interacts with CHP1. Expressed in the brain. Highly expressed in immune cells, specifically macrophages.

It is found in the late endosome membrane. The protein localises to the cell membrane. Its subcellular location is the early endosome membrane. The protein resides in the recycling endosome membrane. It localises to the cytoplasmic vesicle. It is found in the phagosome membrane. The enzyme catalyses Na(+)(in) + H(+)(out) = Na(+)(out) + H(+)(in). The catalysed reaction is K(+)(in) + H(+)(out) = K(+)(out) + H(+)(in). In terms of biological role, endosomal Na(+), K(+)/H(+) antiporter. Mediates the electroneutral exchange of endosomal luminal H(+) for a cytosolic Na(+) or K(+). By facilitating proton efflux, SLC9A9 counteracts the acidity generated by vacuolar (V)-ATPase, thereby limiting luminal acidification. Regulates organellar pH and consequently, endosome maturation and endocytic trafficking of plasma membrane receptors and neurotransporters. Promotes the recycling of transferrin receptors back to the cell surface to facilitate additional iron uptake in the brain. Regulates synaptic transmission by regulating the luminal pH of axonal endosomes. Regulates phagosome lumenal pH, thus affecting phagosome maturation, and consequently, microbicidal activity in macrophages. Can also be active at the cell surface of specialized cells, e.g., in the inner ear hair bundles uses the high K(+) of the endolymph to regulate intracelular pH. The sequence is that of Sodium/hydrogen exchanger 9 (Slc9a9) from Mus musculus (Mouse).